The following is a 335-amino-acid chain: Olfactory receptor 52B6 (335 aa).

The Extracellular portion of the chain corresponds to 1–45; sequence MAQVRALHKIMALFSANSIGAMNNSDTRIAGCFLTGIPGLEQLHI. An N-linked (GlcNAc...) asparagine glycan is attached at N23. Residues 46 to 66 form a helical membrane-spanning segment; that stretch reads WLSIPFCIMYITALEGNGILI. The Cytoplasmic portion of the chain corresponds to 67–74; sequence CVILSQAI. A helical membrane pass occupies residues 75–95; it reads LHEPMYIFLSMLASADVLLST. The Extracellular portion of the chain corresponds to 96–119; sequence TTMPKALANLWLGYSLISFDGCLT. The cysteines at positions 117 and 208 are disulfide-linked. A helical transmembrane segment spans residues 120 to 139; sequence QMFFIHFLFIHSAVLLAMAF. Topologically, residues 140 to 158 are cytoplasmic; it reads DRYVAICSPLRYVTILTSK. Residues 159–179 traverse the membrane as a helical segment; it reads VIGKIVTAALSHSFIIMFPSI. The Extracellular segment spans residues 180 to 215; sequence FLLEHLHYCQINIIAHTFCEHMGIAHLSCSDISINV. Residues 216-236 form a helical membrane-spanning segment; sequence WYGLAAALLSTGLDIMLITVS. At 237–256 the chain is on the cytoplasmic side; it reads YIHILQAVFRLLSQDARSKA. The helical transmembrane segment at 257–277 threads the bilayer; that stretch reads LSTCGSHICVILLFYVPALFS. At 278 to 293 the chain is on the extracellular side; it reads VFAYRFGGRSVPCYVH. Residues 294–314 traverse the membrane as a helical segment; it reads ILLASLYVVIPPMLNPVIYGV. At 315–335 the chain is on the cytoplasmic side; that stretch reads RTKPILEGAKQMFSNLAKGSK.

It belongs to the G-protein coupled receptor 1 family.

The protein localises to the cell membrane. In terms of biological role, odorant receptor. This chain is Olfactory receptor 52B6 (OR52B6), found in Homo sapiens (Human).